The following is a 235-amino-acid chain: Orotidine 5'-phosphate decarboxylase (235 aa).

Residues D12, K34, 61-70 (DMKLLDIDNT), T116, R177, Q186, G206, and R207 each bind substrate. K63 (proton donor) is an active-site residue.

It belongs to the OMP decarboxylase family. Type 1 subfamily. Homodimer.

It catalyses the reaction orotidine 5'-phosphate + H(+) = UMP + CO2. The protein operates within pyrimidine metabolism; UMP biosynthesis via de novo pathway; UMP from orotate: step 2/2. In terms of biological role, catalyzes the decarboxylation of orotidine 5'-monophosphate (OMP) to uridine 5'-monophosphate (UMP). The protein is Orotidine 5'-phosphate decarboxylase of Rhizobium johnstonii (strain DSM 114642 / LMG 32736 / 3841) (Rhizobium leguminosarum bv. viciae).